We begin with the raw amino-acid sequence, 791 residues long: MAKFVLNQNLPDLGGPPLYPGPTGSARSPSSPYSVETPYGFHLDLDFLKYVEEIERGPASRRTPGPPHARRPRASRTGLAGARSPGAWTSSESLASDDGGASGALSPGAFPGLSLPPLSPRSLSRNPRVEHTLLETSRRLEQAQARERALSPARAVTRSPRGSGRSSPAPNPALASPGPAQLQLVREQMAAALRRLRELEDQARALPELQEQVRALRAEKARLLAGRVQPEQEVEIEARPDKLAQLRRLTERLATSDRGVRSRASPRAEDPDGLAARRSEGALQVLDPGSRTPDGEPRTRETGTEVVPETREVDAQAVPETGEAGVEVVPETVEVDTWVTEELLGLPEAAERELELLRTSLEHQRGVSELLRGRLRELEEAHEAAVTRPQSRDVAAQTTLGCTEKTTQTELPVENQPRPTAGDEMAPVGILKSIMKKKDGIPGAQSSQGPKSLQFVGVLNGEYESSSSEDGNSDDEDGVAEHPRSSSSGSDDSSGGSDAGTPGPHNDKDAGDCELETHPELTAGREGRCELNPRLREACIALNQQLNRPRGVTSRDGNAARLVAQEWFRVSSQKRSQAESVAGVLRGVKSLGPELLAYVVNLADGNGNTALHYSVSHGNLAISSLLLDTGVCDVNHQNRAGYSALMLAALTSVGQEEEDMAVAQRLFSMGDVNAKASQTGQTALMLAISHGHQDMVAALLECGADVNVQDADGATALMCASEYGRLDTVQLLLAQPGCDLTILDNEGTSALAIALEAEQDEVAALLHAHLTSNHQGQSSTGSPTAKECNDK.

Disordered regions lie at residues 1 to 37 (MAKF…SVET), 56 to 181 (RGPA…GPAQ), 254 to 312 (ATSD…ETRE), 401 to 425 (GCTE…GDEM), and 463 to 514 (YESS…GDCE). Residues 25–34 (SARSPSSPYS) are compositionally biased toward polar residues. Residues 105-125 (LSPGAFPGLSLPPLSPRSLSR) are compositionally biased toward low complexity. Residues 127 to 149 (PRVEHTLLETSRRLEQAQARERA) show a composition bias toward basic and acidic residues. A phosphoserine mark is found at S151, S159, S163, S166, S167, and S176. Over residues 158–180 (RSPRGSGRSSPAPNPALASPGPA) the composition is skewed to low complexity. A coiled-coil region spans residues 180 to 229 (AQLQLVREQMAAALRRLRELEDQARALPELQEQVRALRAEKARLLAGRVQ). Composition is skewed to basic and acidic residues over residues 254-280 (ATSD…RRSE) and 293-312 (PDGE…ETRE). S279 bears the Phosphoserine mark. Residues 401–410 (GCTEKTTQTE) are compositionally biased toward polar residues. A compositionally biased stretch (low complexity) spans 485 to 496 (SSSSGSDDSSGG). The span at 505–514 (HNDKDAGDCE) shows a compositional bias: basic and acidic residues. 5 ANK repeats span residues 606 to 636 (NGNT…DVNH), 640 to 677 (AGYS…AKAS), 679 to 708 (TGQT…DVNV), 712 to 742 (DGAT…DLTI), and 746 to 775 (EGTS…SNHQ). Residues 772–783 (SNHQGQSSTGSP) show a composition bias toward polar residues. Residues 772–791 (SNHQGQSSTGSPTAKECNDK) are disordered.

Its function is as follows. May be involved in the control of cytoskeleton formation by regulating actin polymerization. The sequence is that of KN motif and ankyrin repeat domain-containing protein 3 from Mus musculus (Mouse).